The sequence spans 404 residues: Sorting nexin-32 (404 aa).

The segment covering 1–10 has biased composition (basic and acidic residues); the sequence is MEEQHQEAGN. The segment at 1 to 29 is disordered; that stretch reads MEEQHQEAGNESKPSSTSVDLQGDSPLQV. Residues 11-20 show a composition bias toward polar residues; sequence ESKPSSTSVD. Residues 21–168 form the PX domain; that stretch reads LQGDSPLQVE…SVFLEYSQDL (148 aa). Positions 255–336 form a coiled coil; the sequence is TQEVNQLKRS…KARTRNREVR (82 aa).

This sequence belongs to the sorting nexin family.

In terms of biological role, may be involved in several stages of intracellular trafficking. The protein is Sorting nexin-32 (Snx32) of Mus musculus (Mouse).